The sequence spans 341 residues: DER1-like family member protein 1 (341 aa).

Residues 1–41 (MAGPRNVRTLHGNGGRNNDVMGPKEFWLNIPPITRTLFTLA) lie on the Cytoplasmic side of the membrane. Residues 42–62 (IVMTIVGRLNLINPWYFIYVW) form a helical membrane-spanning segment. Residues 63–122 (NLTFKKVQIWRLLTSCVMLSSRAMPALMELYSIYDRSSQLERGHFGPGLSNRRGPMVTVD) lie on the Lumenal side of the membrane. The helical transmembrane segment at 123–143 (YAYYLCFCILAITTATTIIYG) threads the bilayer. The Cytoplasmic portion of the chain corresponds to 144-170 (SYYPVVLTSGFISCITYTWSIDNANVQ). The helical transmembrane segment at 171–191 (IMFYGLIPVWGKYFPLIQLFI) threads the bilayer. A topological domain (lumenal) is located at residue serine 192. A helical membrane pass occupies residues 193–213 (FVFNEGDFVISLIGFTTGYLY). Topologically, residues 214-341 (TCLDTHTLGP…GQTNSPSDSQ (128 aa)) are cytoplasmic. 2 stretches are compositionally biased toward polar residues: residues 276–286 (SSQRETRTFSG) and 296–341 (ATLS…SDSQ). Positions 276 to 341 (SSQRETRTFS…GQTNSPSDSQ (66 aa)) are disordered.

The protein belongs to the derlin family.

The protein resides in the endoplasmic reticulum membrane. Its function is as follows. May be involved in the degradation process of some misfolded endoplasmic reticulum (ER) luminal proteins. Its precise role is however unclear and its inability to complement der1 mutations, suggests either that it is not involved in degradation process of misfolded proteins, or that it participates in the destruction of specific misfolded ER luminal proteins. This is DER1-like family member protein 1 (DFM1) from Saccharomyces cerevisiae (strain ATCC 204508 / S288c) (Baker's yeast).